A 319-amino-acid chain; its full sequence is tRNA uridine(34) hydroxylase (319 aa).

The 95-residue stretch at 127 to 221 (KQEDTVIIDA…YGKDPEVQGE (95 aa)) folds into the Rhodanese domain. Catalysis depends on Cys181, which acts as the Cysteine persulfide intermediate.

It belongs to the TrhO family.

It catalyses the reaction uridine(34) in tRNA + AH2 + O2 = 5-hydroxyuridine(34) in tRNA + A + H2O. Catalyzes oxygen-dependent 5-hydroxyuridine (ho5U) modification at position 34 in tRNAs. This chain is tRNA uridine(34) hydroxylase, found in Bacillus mycoides (strain KBAB4) (Bacillus weihenstephanensis).